We begin with the raw amino-acid sequence, 1893 residues long: Plexin-A4 (1893 aa).

The first 23 residues, 1-23 (MKAMPWNWTCLLSHLLVVGMGSS), serve as a signal peptide directing secretion. The region spanning 24–506 (TLLPRQPPQL…SERQLTRVPV (483 aa)) is the Sema domain. Residues 24–1236 (TLLPRQPPQL…IAPDSPLSLP (1213 aa)) lie on the Extracellular side of the membrane. Disulfide bonds link Cys94-Cys103, Cys129-Cys137, Cys283-Cys404, Cys299-Cys355, Cys373-Cys392, Cys509-Cys526, Cys515-Cys557, Cys518-Cys535, Cys529-Cys541, and Cys592-Cys611. The region spanning 508–558 (SCGQYRSCGECLGSGDPHCGWCVLHNTCTRKERCERSREPRRFASEMKQCV) is the PSI 1 domain. Asn654 carries N-linked (GlcNAc...) asparagine glycosylation. PSI domains lie at 654-701 (NCSV…EDCP) and 802-855 (KCGA…SKCT). IPT/TIG domains follow at residues 857–951 (PRIT…YYFM), 953–1036 (LTLA…FQYV), 1039–1138 (PTIV…FTYY), and 1141–1229 (PVFE…YIAP). N-linked (GlcNAc...) asparagine glycans are attached at residues Asn1006, Asn1131, and Asn1179. Residues 1237–1257 (AIVSIAVAGGLLIIFIVAVLI) traverse the membrane as a helical segment. Residues 1258-1893 (AYKRKSRESD…QVITLMSLDS (636 aa)) lie on the Cytoplasmic side of the membrane. Lys1349 is subject to N6-acetyllysine.

This sequence belongs to the plexin family. Interacts with NRP1 and NRP2. As to expression, expressed in the developing nervous system. Widely expressed in both the central and peripheral nervous systems. Expressed in the peripheral ganglia, somatosensory, olfactory, visual, auditory and equilibrium systems.

The protein resides in the cell membrane. In terms of biological role, coreceptor for SEMA3A. Necessary for signaling by class 3 semaphorins and subsequent remodeling of the cytoskeleton. Plays a role in axon guidance in the developing nervous system. Class 3 semaphorins bind to a complex composed of a neuropilin and a plexin. The plexin modulates the affinity of the complex for specific semaphorins, and its cytoplasmic domain is required for the activation of down-stream signaling events in the cytoplasm. The protein is Plexin-A4 (Plxna4) of Mus musculus (Mouse).